The chain runs to 137 residues: F420H(2)-dependent biliverdin reductase (137 aa).

Coenzyme F420-(gamma-Glu)n contacts are provided by residues 36–41 (HVVAVG), 54–55 (IT), 60–61 (QK), Arg-67, and 78–81 (GARW).

It belongs to the F420H(2)-dependent biliverdin reductase family. In terms of assembly, homodimer.

It is found in the cell surface. It localises to the secreted. It carries out the reaction (4Z,15Z)-bilirubin IXalpha + oxidized coenzyme F420-(gamma-L-Glu)(n) + H(+) = biliverdin IXalpha + reduced coenzyme F420-(gamma-L-Glu)(n). Functionally, catalyzes the F420H(2)-dependent reduction of biliverdin-IXalpha at C10 position, leading to bilirubin-IXalpha, a potent antioxidant. As biliverdin-IXalpha is produced in high amounts in macrophages infected with M.tuberculosis, its reduction by Rv2074 may play a role in protecting mycobacteria against oxidative stress, aiding the persistence of M.tuberculosis infection. The chain is F420H(2)-dependent biliverdin reductase from Mycobacterium tuberculosis (strain CDC 1551 / Oshkosh).